A 264-amino-acid chain; its full sequence is MSKITSSTLLKFKQEGKKFTALTAYDASFASAFDSEGIDVLLVGDSMGMVLQGHDDTLPVTVEDIAYHTRCVRRGIKRSLLIADMPFMSYATSEQAMTNATALMQAGANMVKLEGGHWLLDTISKLTERGIPVCAHLGLTPQSVHVFGGFKVQGRDSDNAQRILDEAKAIEAAGAQLLVVECIPAPLAKTISEALTIPVIGIGAGADTDGQILVMHDVLGISSGYIPRFSKNYLKQTGEIREAIRAYIDEVAQGIFPGSDHTFN.

Mg(2+) contacts are provided by Asp45 and Asp84. Residues 45-46, Asp84, and Lys112 each bind 3-methyl-2-oxobutanoate; that span reads DS. Glu114 is a binding site for Mg(2+). The Proton acceptor role is filled by Glu181.

It belongs to the PanB family. Homodecamer; pentamer of dimers. Mg(2+) is required as a cofactor.

The protein localises to the cytoplasm. It carries out the reaction 3-methyl-2-oxobutanoate + (6R)-5,10-methylene-5,6,7,8-tetrahydrofolate + H2O = 2-dehydropantoate + (6S)-5,6,7,8-tetrahydrofolate. The protein operates within cofactor biosynthesis; (R)-pantothenate biosynthesis; (R)-pantoate from 3-methyl-2-oxobutanoate: step 1/2. Its function is as follows. Catalyzes the reversible reaction in which hydroxymethyl group from 5,10-methylenetetrahydrofolate is transferred onto alpha-ketoisovalerate to form ketopantoate. This is 3-methyl-2-oxobutanoate hydroxymethyltransferase from Shewanella sediminis (strain HAW-EB3).